Reading from the N-terminus, the 78-residue chain is ATP synthase subunit a (78 aa).

Transmembrane regions (helical) follow at residues 13 to 33, 35 to 55, and 57 to 77; these read LFGN…LGTS, FLGA…GMFI, and SLQA…KVEA.

This sequence belongs to the ATPase A chain family. As to quaternary structure, F-type ATPases have 2 components, CF(1) - the catalytic core - and CF(0) - the membrane proton channel. CF(1) has five subunits: alpha(3), beta(3), gamma(1), delta(1), epsilon(1). CF(0) has three main subunits: a(1), b(2) and c(9-12). The alpha and beta chains form an alternating ring which encloses part of the gamma chain. CF(1) is attached to CF(0) by a central stalk formed by the gamma and epsilon chains, while a peripheral stalk is formed by the delta and b chains.

The protein resides in the cell membrane. Key component of the proton channel; it plays a direct role in the translocation of protons across the membrane. The sequence is that of ATP synthase subunit a (atpB) from Alkalihalobacillus alcalophilus (Bacillus alcalophilus).